The primary structure comprises 360 residues: Phospho-N-acetylmuramoyl-pentapeptide-transferase (360 aa).

The next 10 helical transmembrane spans lie at 26–46 (AILG…KLIE), 74–94 (MGGL…GDLG), 97–117 (YVWV…IDDY), 134–154 (YILQ…TAAN), 168–188 (VMPQ…VGAS), 199–219 (GLAI…AYLS), 236–256 (SGEL…FLWF), 263–283 (VFMG…IAVL), 288–308 (ILLV…ILQV), and 338–358 (VIVR…ATLK).

Belongs to the glycosyltransferase 4 family. MraY subfamily. The cofactor is Mg(2+).

It localises to the cell inner membrane. The catalysed reaction is UDP-N-acetyl-alpha-D-muramoyl-L-alanyl-gamma-D-glutamyl-meso-2,6-diaminopimeloyl-D-alanyl-D-alanine + di-trans,octa-cis-undecaprenyl phosphate = di-trans,octa-cis-undecaprenyl diphospho-N-acetyl-alpha-D-muramoyl-L-alanyl-D-glutamyl-meso-2,6-diaminopimeloyl-D-alanyl-D-alanine + UMP. It participates in cell wall biogenesis; peptidoglycan biosynthesis. In terms of biological role, catalyzes the initial step of the lipid cycle reactions in the biosynthesis of the cell wall peptidoglycan: transfers peptidoglycan precursor phospho-MurNAc-pentapeptide from UDP-MurNAc-pentapeptide onto the lipid carrier undecaprenyl phosphate, yielding undecaprenyl-pyrophosphoryl-MurNAc-pentapeptide, known as lipid I. The chain is Phospho-N-acetylmuramoyl-pentapeptide-transferase from Shewanella baltica (strain OS185).